The following is a 193-amino-acid chain: PXMP2/4 family protein 2 (193 aa).

4 helical membrane-spanning segments follow: residues 56–78, 96–116, 132–152, and 160–180; these read VATM…YRSL, IDQL…TNFI, LFYA…INFS, and VLYS…ISFD.

It belongs to the peroxisomal membrane protein PXMP2/4 family.

The protein localises to the membrane. In Dictyostelium discoideum (Social amoeba), this protein is PXMP2/4 family protein 2.